A 452-amino-acid polypeptide reads, in one-letter code: Aspartyl/glutamyl-tRNA(Asn/Gln) amidotransferase subunit B (452 aa).

It belongs to the GatB/GatE family. GatB subfamily. Heterotrimer of A, B and C subunits.

The enzyme catalyses L-glutamyl-tRNA(Gln) + L-glutamine + ATP + H2O = L-glutaminyl-tRNA(Gln) + L-glutamate + ADP + phosphate + H(+). The catalysed reaction is L-aspartyl-tRNA(Asn) + L-glutamine + ATP + H2O = L-asparaginyl-tRNA(Asn) + L-glutamate + ADP + phosphate + 2 H(+). Functionally, allows the formation of correctly charged Asn-tRNA(Asn) or Gln-tRNA(Gln) through the transamidation of misacylated Asp-tRNA(Asn) or Glu-tRNA(Gln) in organisms which lack either or both of asparaginyl-tRNA or glutaminyl-tRNA synthetases. The reaction takes place in the presence of glutamine and ATP through an activated phospho-Asp-tRNA(Asn) or phospho-Glu-tRNA(Gln). In Methanosphaera stadtmanae (strain ATCC 43021 / DSM 3091 / JCM 11832 / MCB-3), this protein is Aspartyl/glutamyl-tRNA(Asn/Gln) amidotransferase subunit B.